A 130-amino-acid polypeptide reads, in one-letter code: Holo-[acyl-carrier-protein] synthase (130 aa).

Mg(2+)-binding residues include D8 and E62.

It belongs to the P-Pant transferase superfamily. AcpS family. Requires Mg(2+) as cofactor.

Its subcellular location is the cytoplasm. It carries out the reaction apo-[ACP] + CoA = holo-[ACP] + adenosine 3',5'-bisphosphate + H(+). Functionally, transfers the 4'-phosphopantetheine moiety from coenzyme A to a Ser of acyl-carrier-protein. The polypeptide is Holo-[acyl-carrier-protein] synthase (Herminiimonas arsenicoxydans).